Reading from the N-terminus, the 505-residue chain is AMP phosphorylase (505 aa).

AMP-binding positions include Gly170, 196–201, and Thr205; that span reads SRAITS. Catalysis depends on Asp258, which acts as the Proton donor. AMP-binding residues include Ser266 and Lys290.

This sequence belongs to the thymidine/pyrimidine-nucleoside phosphorylase family. Type 2 subfamily.

The enzyme catalyses AMP + phosphate = alpha-D-ribose 1,5-bisphosphate + adenine. The catalysed reaction is CMP + phosphate = cytosine + alpha-D-ribose 1,5-bisphosphate. It carries out the reaction UMP + phosphate = alpha-D-ribose 1,5-bisphosphate + uracil. In terms of biological role, catalyzes the conversion of AMP and phosphate to adenine and ribose 1,5-bisphosphate (R15P). Exhibits phosphorylase activity toward CMP and UMP in addition to AMP. Functions in an archaeal AMP degradation pathway, together with R15P isomerase and RubisCO. The sequence is that of AMP phosphorylase from Methanococcus vannielii (strain ATCC 35089 / DSM 1224 / JCM 13029 / OCM 148 / SB).